Here is a 463-residue protein sequence, read N- to C-terminus: Elongation factor 1-alpha (463 aa).

Position 2 is a n,N,N-trimethylglycine (Gly-2). Lys-3 carries the post-translational modification N6,N6-dimethyllysine; alternate. Position 3 is an N6-methyllysine; alternate (Lys-3). Residues Lys-5–Thr-239 enclose the tr-type G domain. Positions Gly-14–Ser-21 are G1. Residue Gly-14 to Ser-21 participates in GTP binding. Position 30 is an N6-methyllysine (Lys-30). A G2 region spans residues Gly-70 to Asp-74. Lys-79 carries the N6,N6,N6-trimethyllysine modification. The tract at residues Asp-91–Gly-94 is G3. Residues Asp-91–His-95 and Asn-153–Asp-156 contribute to the GTP site. Positions Asn-153–Asp-156 are G4. The tract at residues Ser-191–Trp-193 is G5. At Lys-315 the chain carries N6,N6-dimethyllysine; alternate. Lys-315 is subject to N6-methyllysine; alternate. N6-methyllysine is present on Lys-389.

It belongs to the TRAFAC class translation factor GTPase superfamily. Classic translation factor GTPase family. EF-Tu/EF-1A subfamily.

The protein resides in the cytoplasm. Functionally, this protein promotes the GTP-dependent binding of aminoacyl-tRNA to the A-site of ribosomes during protein biosynthesis. The sequence is that of Elongation factor 1-alpha (TEF) from Puccinia graminis (Black stem rust fungus).